We begin with the raw amino-acid sequence, 1283 residues long: Bifunctional dioxygenase (DOX)-epoxy alcohol synthase (EAS) (1283 aa).

Positions 1-64 (MAEHKNGVAT…LPKEMGDGSY (64 aa)) are disordered. Positions 130 to 476 (TNSFISQLWN…DGKFNDDELV (347 aa)) are fatty acid alpha-dioxygenase. H227 lines the heme b pocket. Y405 is a catalytic residue. H408 contacts heme b. The tract at residues 684-1108 (INIIGYNAAK…WDDGCGTDLF (425 aa)) is epoxy alcohol synthase. Position 1035 (C1035) interacts with heme.

This sequence in the N-terminal section; belongs to the peroxidase family. In the C-terminal section; belongs to the cytochrome P450 family. In terms of assembly, homotetramer. Heme b serves as cofactor. Heme is required as a cofactor.

It carries out the reaction (9Z,12Z)-octadecadienoate + O2 = (8E,10R,12Z)-10-hydroperoxyoctadeca-8,12-dienoate. The catalysed reaction is (8E,10R,12Z)-10-hydroperoxyoctadeca-8,12-dienoate = (12S,13R)-epoxy-(10R)-hydroxy-(8E)-octadecenoate. It catalyses the reaction (9Z)-octadecenoate + O2 = (8R)-hydroperoxy-(9Z)-octadecenoate. In terms of biological role, bifunctional dioxygenase (DOX)-epoxy alcohol synthase (EAS) that converts linoleic acid (18:2n-6) sequentially to 10(R)-hydroperoxy-8(E),12(Z)-octadecadienoic acid (10R-HPODE) and 10R-HPODE further to 12(13)-epoxy-10-hydroxy-8(E)-octa-decenoic acid as the end product. Linoleic acid is oxidized mainly to the R stereoisomer of 10-HPODE. The dioxygenase domain is also able to oygenate position C-8 of linoleic acid to produce 8(R)-hydroperoxy-8(E),12(Z)-octadecadienoic acid (8R-HPODE). This Fusarium oxysporum (strain Fo5176) (Fusarium vascular wilt) protein is Bifunctional dioxygenase (DOX)-epoxy alcohol synthase (EAS).